A 218-amino-acid polypeptide reads, in one-letter code: SGKPVLHYFNVQGRMESIRWLLAAAGVEFEEKLIMCQEDLDKLKNDGLLMFQQVPMVEMDGMKMVQSRAILNYIATKYNLYGKDTKERLLIDMYTEGMTDLYELFFKVILAPPEEKDAAKSLIKDRAKNRFLPAFEKVLKSHGQGYLVGNKLSKADILLTELLYMVEEFDASLLANFTLLQALKTRVSNLPNVKKFLQPGSQRKPFPTQEMFEEMRKF.

Ser1 bears the N-acetylserine mark. A GST N-terminal domain is found at 2 to 82 (GKPVLHYFNV…YIATKYNLYG (81 aa)). N6-succinyllysine is present on Lys3. Glutathione contacts are provided by residues Tyr8, Lys44, 53–54 (QV), and 66–67 (QS). Positions 84–206 (DTKERLLIDM…LQPGSQRKPF (123 aa)) constitute a GST C-terminal domain.

Belongs to the GST superfamily. Alpha family. Homodimer or heterodimer of GSTA1 and GSTA2.

The protein resides in the cytoplasm. The enzyme catalyses RX + glutathione = an S-substituted glutathione + a halide anion + H(+). It carries out the reaction prostaglandin A2 + glutathione = prostaglandin A2-S-(R)-glutathione. It catalyses the reaction prostaglandin J2 + glutathione = prostaglandin J2-S-(R)-glutathione. The catalysed reaction is (13S)-hydroperoxy-(9Z,11E)-octadecadienoate + 2 glutathione = (13S)-hydroxy-(9Z,11E)-octadecadienoate + glutathione disulfide + H2O. The enzyme catalyses androst-5-ene-3,17-dione = androst-4-ene-3,17-dione. Functionally, glutathione S-transferase that catalyzes the nucleophilic attack of the sulfur atom of glutathione on the electrophilic groups of a wide range of exogenous and endogenous compounds. Involved in the formation of glutathione conjugates of both prostaglandin A2 (PGA2) and prostaglandin J2 (PGJ2). It also catalyzes the isomerization of D5-androstene-3,17-dione (AD) into D4-androstene-3,17-dione and may therefore play an important role in hormone biosynthesis. Through its glutathione-dependent peroxidase activity toward the fatty acid hydroperoxide (13S)-hydroperoxy-(9Z,11E)-octadecadienoate/13-HPODE it is also involved in the metabolism of oxidized linoleic acid. The chain is Glutathione S-transferase A from Cavia porcellus (Guinea pig).